Here is a 208-residue protein sequence, read N- to C-terminus: Small ribosomal subunit protein uS4 (208 aa).

Residues 24-52 (GVKPFDVKTKKANKAPGQHGQARGGKQSE) are disordered. Residues 98 to 160 (SRLDNVVYRM…AKQQLRIKNA (63 aa)) form the S4 RNA-binding domain.

It belongs to the universal ribosomal protein uS4 family. In terms of assembly, part of the 30S ribosomal subunit. Contacts protein S5. The interaction surface between S4 and S5 is involved in control of translational fidelity.

One of the primary rRNA binding proteins, it binds directly to 16S rRNA where it nucleates assembly of the body of the 30S subunit. Its function is as follows. With S5 and S12 plays an important role in translational accuracy. The protein is Small ribosomal subunit protein uS4 of Acinetobacter baumannii (strain ATCC 17978 / DSM 105126 / CIP 53.77 / LMG 1025 / NCDC KC755 / 5377).